Here is a 433-residue protein sequence, read N- to C-terminus: Pyrimidine-nucleoside phosphorylase (433 aa).

81-83 (KHS) lines the phosphate pocket. K(+)-binding residues include Gly88 and Thr90. Phosphate-binding positions include Thr92, 108 to 110 (KMS), and Thr120. Residues Arg168 and Lys187 each coordinate substrate. Residues Leu243, Ala246, and Glu255 each coordinate K(+).

The protein belongs to the thymidine/pyrimidine-nucleoside phosphorylase family. In terms of assembly, homodimer. The cofactor is K(+).

It carries out the reaction uridine + phosphate = alpha-D-ribose 1-phosphate + uracil. The catalysed reaction is thymidine + phosphate = 2-deoxy-alpha-D-ribose 1-phosphate + thymine. It catalyses the reaction 2'-deoxyuridine + phosphate = 2-deoxy-alpha-D-ribose 1-phosphate + uracil. In terms of biological role, catalyzes phosphorolysis of the pyrimidine nucleosides uridine, thymidine and 2'-deoxyuridine with the formation of the corresponding pyrimidine base and ribose-1-phosphate. This Staphylococcus aureus (strain NCTC 8325 / PS 47) protein is Pyrimidine-nucleoside phosphorylase (pdp).